A 427-amino-acid polypeptide reads, in one-letter code: Glutamate-1-semialdehyde 2,1-aminomutase (427 aa).

Lys-269 is modified (N6-(pyridoxal phosphate)lysine).

Belongs to the class-III pyridoxal-phosphate-dependent aminotransferase family. HemL subfamily. In terms of assembly, homodimer. Requires pyridoxal 5'-phosphate as cofactor.

The protein resides in the cytoplasm. It catalyses the reaction (S)-4-amino-5-oxopentanoate = 5-aminolevulinate. Its pathway is porphyrin-containing compound metabolism; protoporphyrin-IX biosynthesis; 5-aminolevulinate from L-glutamyl-tRNA(Glu): step 2/2. The protein is Glutamate-1-semialdehyde 2,1-aminomutase of Thermus thermophilus (strain ATCC BAA-163 / DSM 7039 / HB27).